Reading from the N-terminus, the 570-residue chain is Frizzled-2 (570 aa).

An N-terminal signal peptide occupies residues 1 to 28 (MRARSALPRSALPRLLLPLLLLPAAGPA). The Extracellular portion of the chain corresponds to 29–252 (QFHGEKGISI…HHHTRFARLW (224 aa)). An FZ domain is found at 39–158 (PDHGFCQPIS…HGAEQICVGQ (120 aa)). 5 disulfide bridges follow: cysteine 44–cysteine 105, cysteine 52–cysteine 98, cysteine 89–cysteine 126, cysteine 115–cysteine 155, and cysteine 119–cysteine 143. N-linked (GlcNAc...) asparagine glycosylation occurs at asparagine 58. Asparagine 159 carries an N-linked (GlcNAc...) asparagine glycan. Residues 166–194 (PALLTTAPPSGLQPGAGGTPGGPGGGGAP) form a disordered region. Residues 179–193 (PGAGGTPGGPGGGGA) are compositionally biased toward gly residues. The helical transmembrane segment at 253–273 (ILTWSVLCCASTFFTVTTSLV) threads the bilayer. Over 274–284 (AMQRFRYPERP) the chain is Cytoplasmic. Residues 285–305 (IIFLSGCYTMVSVAYIAGFVL) form a helical membrane-spanning segment. The Extracellular segment spans residues 306–332 (QERVVCNERFSEDGYRTVGQGTKKEGC). A helical transmembrane segment spans residues 333–353 (TILFMMLYFFSMASSIWWVIL). At 354–375 (SLTWFLAAGMKWGHAAIEANSQ) the chain is on the cytoplasmic side. A helical membrane pass occupies residues 376–396 (YFHLAAWAVPAVKTITILAMG). Residues 397-419 (QIDGDLLSGVCFVGLNRLDPLRG) are Extracellular-facing. Residues 420–440 (FVLAPLFVYLFIGTSFLLAGF) traverse the membrane as a helical segment. Over 441 to 466 (VSLFRIRTIMKHDGTKTEPLERLMVR) the chain is Cytoplasmic. A helical transmembrane segment spans residues 467–487 (IGVFSVLYTVPATIVIACYFY). Topologically, residues 488–524 (EQAFREHWERSWVSQHCKSLAIPCPAHYTPRTSPDFT) are extracellular. Residues 525 to 545 (VYMIKYLMTLIVGITSGFWIW) form a helical membrane-spanning segment. At 546–570 (SGKTLHSWRKFYTRLTNSRHGETTV) the chain is on the cytoplasmic side. The Lys-Thr-X-X-X-Trp motif, mediates interaction with the PDZ domain of Dvl family members signature appears at 548-553 (KTLHSW). Positions 568–570 (TTV) match the PDZ-binding motif.

The protein belongs to the G-protein coupled receptor Fz/Smo family. Post-translationally, ubiquitinated by ZNRF3, leading to its degradation by the proteasome. As to expression, widely expressed. Most abundant in kidney, liver, uterus, ovary and heart. Lower levels seen in brain and intestine. Extremely low in calvaria, mammary glands and testis.

Its subcellular location is the membrane. The protein localises to the cell membrane. Functionally, receptor for Wnt proteins. Most of frizzled receptors are coupled to the beta-catenin canonical signaling pathway, which leads to the activation of disheveled proteins, inhibition of GSK-3 kinase, nuclear accumulation of beta-catenin and activation of Wnt target genes. A second signaling pathway involving PKC and calcium fluxes has been seen for some family members, but it is not yet clear if it represents a distinct pathway or if it can be integrated in the canonical pathway, as PKC seems to be required for Wnt-mediated inactivation of GSK-3 kinase. Both pathways seem to involve interactions with G-proteins. May be involved in transduction and intercellular transmission of polarity information during tissue morphogenesis and/or in differentiated tissues. Activation by Wnt5A stimulates PKC activity via a G-protein-dependent mechanism. The sequence is that of Frizzled-2 (Fzd2) from Rattus norvegicus (Rat).